Here is a 467-residue protein sequence, read N- to C-terminus: Transcription factor TGAL7 (467 aa).

The segment covering 1 to 10 (MGGSREEDRQ) has biased composition (basic and acidic residues). Disordered stretches follow at residues 1–42 (MGGS…KESS) and 105–184 (QLQV…KTLR). Residues 25 to 41 (SSSPTTMIASSSMSKES) show a composition bias toward low complexity. Positions 120-129 (QGGQKINSSV) are enriched in polar residues. Basic and acidic residues predominate over residues 145–157 (KDNKNSSLIKKEG). The span at 158–168 (SSSGKGATTSN) shows a compositional bias: polar residues. Over residues 169–182 (DPEREGRRTLDPKT) the composition is skewed to basic and acidic residues. One can recognise a bZIP domain in the interval 179-223 (DPKTLRRLAQNREAARKSRLRKKAYIQQLESSRIRLSQLEQQVHV). The tract at residues 181–201 (KTLRRLAQNREAARKSRLRKK) is basic motif. The segment at 207 to 221 (LESSRIRLSQLEQQV) is leucine-zipper. Positions 247-458 (ASLFDLEYGR…RALSTLWVAR (212 aa)) constitute a DOG1 domain.

Belongs to the bZIP family. In terms of assembly, interacts with NPR5/NH4, NH5.1 and NH5.2.

The protein localises to the nucleus. In terms of biological role, transcriptional regulator involved in defense response. The chain is Transcription factor TGAL7 from Oryza sativa subsp. japonica (Rice).